The chain runs to 735 residues: Mitochondrial potassium channel ATP-binding subunit (735 aa).

The N-terminal 25 residues, 1–25, are a transit peptide targeting the mitochondrion; sequence MLVHLFRVGIRGGPFPGRLLPPLRF. Residues 26-144 are Mitochondrial matrix-facing; sequence QTFSAVRNTW…KLFWQFLHPH (119 aa). The chain crosses the membrane as a helical span at residues 145 to 165; that stretch reads LLVLGVAVVLALGAALVNVQI. One can recognise an ABC transmembrane type-1 domain in the interval 150 to 437; the sequence is VAVVLALGAA…LSVLFGQVVR (288 aa). Residues 166-195 are Mitochondrial intermembrane-facing; sequence PLLLGQLVEVVAKYTRDHVGSFMTESQNLS. Residues 196–216 form a helical membrane-spanning segment; sequence THLLILYGVQGLLTFGYLVLL. The Mitochondrial matrix portion of the chain corresponds to 217 to 295; that stretch reads SHVGERMAVD…SLSMLSTRLT (79 aa). The chain crosses the membrane as a helical span at residues 296 to 316; that stretch reads LLLMVATPALMGVGTLMGSGL. The Mitochondrial intermembrane portion of the chain corresponds to 317-735; it reads RKLSRQCQEQ…EGPRSHQHKS (419 aa). The ABC transporter domain maps to 472–709; that stretch reads VTFQNVCFSY…GGLYAELIRR (238 aa). 507 to 514 provides a ligand contact to ATP; that stretch reads GQSGGGKT. Positions 712–735 are disordered; that stretch reads LDAPRTAAPPPKKPEGPRSHQHKS.

Belongs to the ABC transporter superfamily. ABCB family. Multidrug resistance exporter (TC 3.A.1.201) subfamily. In terms of assembly, the mitochondrial potassium channel (mitoK(ATP)) is composed of 4 subunits of CCDC51/MITOK and 4 subunits of ABCB8/MITOSUR. Interacts with C10orf88/PAAT. Interacts with NRP1; NRP1 regulates ABCB8/MITOSUR protein levels in mitochondria. As to expression, ubiquitous.

The protein resides in the mitochondrion inner membrane. Channel activity inhibited by ATP via ABCB8/MITOSUR subunit. In terms of biological role, ATP-binding subunit of the mitochondrial ATP-gated potassium channel (mitoK(ATP)). Together with pore-forming subunit CCDC51/MITOK of the mitoK(ATP) channel, mediates ATP-dependent potassium currents across the mitochondrial inner membrane. An increase in ATP intracellular levels closes the channel, inhibiting K(+) transport, whereas a decrease in ATP levels enhances K(+) uptake in the mitochondrial matrix. Plays a role in mitochondrial iron transport. Required for maintenance of normal cardiac function, possibly by influencing mitochondrial iron export and regulating the maturation of cytosolic iron sulfur cluster-containing enzymes. In Homo sapiens (Human), this protein is Mitochondrial potassium channel ATP-binding subunit.